We begin with the raw amino-acid sequence, 408 residues long: Serine/threonine transporter SstT (408 aa).

Transmembrane regions (helical) follow at residues L11–A31, F43–L63, I82–M102, A141–L161, I192–G212, L216–V236, M298–I318, A339–I359, and V363–T383.

The protein belongs to the dicarboxylate/amino acid:cation symporter (DAACS) (TC 2.A.23) family.

The protein localises to the cell inner membrane. It catalyses the reaction L-serine(in) + Na(+)(in) = L-serine(out) + Na(+)(out). The catalysed reaction is L-threonine(in) + Na(+)(in) = L-threonine(out) + Na(+)(out). Its function is as follows. Involved in the import of serine and threonine into the cell, with the concomitant import of sodium (symport system). This is Serine/threonine transporter SstT from Shewanella sp. (strain MR-7).